Here is a 293-residue protein sequence, read N- to C-terminus: MFIALWEFFYGHFFRFWMKWLLRQMTGKCELQRIFDTYVGAQRTHRIENSLTYSKNKVLQKATLVVQSEVDRCVEDIMKEKNINPEKDASFKICMKACLLQISGYKQLYLDVESVRKKPYDSDNLQHEKLLIKLWNLLMPTKKLKARISKQWADIGFQGDDPKTDFRGMGILGLINLVYFSENYTSEAHQILSRSNHPKLGYSYAIVGINLTEMAYSLLKSEALKFHLYNFVPGIPTMEHFHQFYCYLVYEFDKFWFEEKPESIMYFNVYREKFHEKIKGLLLDCNVSLTLKI.

The ELMO domain maps to 126–282 (QHEKLLIKLW…KFHEKIKGLL (157 aa)).

Functionally, acts as a GTPase-activating protein (GAP) toward guanine nucleotide exchange factors like ARL2, ARL3, ARF1 and ARF6, but not for GTPases outside the Arf family. The chain is ELMO domain-containing protein 2 (ELMOD2) from Bos taurus (Bovine).